The sequence spans 77 residues: Large ribosomal subunit protein eL20 (77 aa).

It belongs to the eukaryotic ribosomal protein eL20 family. As to quaternary structure, part of the 50S ribosomal subunit. Binds 23S rRNA.

The sequence is that of Large ribosomal subunit protein eL20 from Thermococcus gammatolerans (strain DSM 15229 / JCM 11827 / EJ3).